Here is a 750-residue protein sequence, read N- to C-terminus: Photosystem I P700 chlorophyll a apoprotein A1 (750 aa).

The next 8 membrane-spanning stretches (helical) occupy residues 70–93 (VFSA…FHGA), 156–179 (LYCT…FHYH), 195–219 (LNHH…HVSL), 291–309 (TVHH…GHMY), 346–369 (WHAQ…HHMY), 385–411 (LSLF…IFMV), 433–455 (AIIS…LYIH), and 531–549 (FLVH…LILL). 2 residues coordinate [4Fe-4S] cluster: Cys573 and Cys582. Helical transmembrane passes span 589-610 (HVFL…HFSW) and 664-686 (LSAY…MFLF). Position 675 (His675) interacts with chlorophyll a'. Met683 and Tyr691 together coordinate chlorophyll a. Position 692 (Trp692) interacts with phylloquinone. Residues 724 to 744 (AVGVAHYLLGGIATTWAFFLA) traverse the membrane as a helical segment.

This sequence belongs to the PsaA/PsaB family. As to quaternary structure, the PsaA/B heterodimer binds the P700 chlorophyll special pair and subsequent electron acceptors. PSI consists of a core antenna complex that captures photons, and an electron transfer chain that converts photonic excitation into a charge separation. The eukaryotic PSI reaction center is composed of at least 11 subunits. P700 is a chlorophyll a/chlorophyll a' dimer, A0 is one or more chlorophyll a, A1 is one or both phylloquinones and FX is a shared 4Fe-4S iron-sulfur center. serves as cofactor.

It is found in the plastid. The protein resides in the chloroplast thylakoid membrane. It carries out the reaction reduced [plastocyanin] + hnu + oxidized [2Fe-2S]-[ferredoxin] = oxidized [plastocyanin] + reduced [2Fe-2S]-[ferredoxin]. PsaA and PsaB bind P700, the primary electron donor of photosystem I (PSI), as well as the electron acceptors A0, A1 and FX. PSI is a plastocyanin-ferredoxin oxidoreductase, converting photonic excitation into a charge separation, which transfers an electron from the donor P700 chlorophyll pair to the spectroscopically characterized acceptors A0, A1, FX, FA and FB in turn. Oxidized P700 is reduced on the lumenal side of the thylakoid membrane by plastocyanin. The polypeptide is Photosystem I P700 chlorophyll a apoprotein A1 (Psilotum nudum (Whisk fern)).